The chain runs to 126 residues: Large ribosomal subunit protein uL14 (126 aa).

Belongs to the universal ribosomal protein uL14 family. In terms of assembly, part of the 50S ribosomal subunit. Forms a cluster with proteins L3 and L19. In the 70S ribosome, L14 and L19 interact and together make contacts with the 16S rRNA in bridges B5 and B8.

In terms of biological role, binds to 23S rRNA. Forms part of two intersubunit bridges in the 70S ribosome. In Persephonella marina (strain DSM 14350 / EX-H1), this protein is Large ribosomal subunit protein uL14.